The primary structure comprises 1849 residues: TATA-binding protein-associated factor 172 (1849 aa).

Positions Asn-77–Thr-97 are disordered. The span at Glu-85–Thr-97 shows a compositional bias: polar residues. 2 positions are modified to phosphoserine: Ser-91 and Ser-95. A Nuclear localization signal motif is present at residues Gln-191–Arg-207. A disordered region spans residues Phe-219 to Arg-247. The segment covering Arg-223–Asp-236 has biased composition (basic and acidic residues). 8 HEAT repeats span residues Thr-385–Asp-422, Thr-426–Tyr-463, Gln-513–Gln-550, Ser-554–Val-596, Thr-818–Arg-855, Glu-872–Thr-910, Pro-1102–Met-1139, and Pro-1182–Leu-1219. The Helicase ATP-binding domain maps to Ala-1278–Gly-1453. Position 1291–1298 (Asp-1291–Thr-1298) interacts with ATP. The DEGH box signature appears at Asp-1404–His-1407. Residues Ser-1636–Gly-1790 form the Helicase C-terminal domain.

Belongs to the SNF2/RAD54 helicase family. Associates with TBP to form B-TFIID. Binds DRAP1.

The protein localises to the nucleus. Its function is as follows. Regulates transcription in association with TATA binding protein (TBP). Removes TBP from the TATA box in an ATP-dependent manner. The protein is TATA-binding protein-associated factor 172 (BTAF1) of Homo sapiens (Human).